The primary structure comprises 912 residues: Bifunctional uridylyltransferase/uridylyl-removing enzyme (912 aa).

A uridylyltransferase region spans residues 1-369 (MLPRIANQRA…FFASLRSRRK (369 aa)). Residues 370 to 722 (KVGPFFIEGG…AHWYPARGAT (353 aa)) are uridylyl-removing. The HD domain maps to 486 to 608 (VDEHTIRAIG…VQSQERLRLL (123 aa)). 2 consecutive ACT domains span residues 723–802 (LVTV…LVPQ) and 834–912 (VIEV…KDAA).

The protein belongs to the GlnD family. Mg(2+) is required as a cofactor.

The catalysed reaction is [protein-PII]-L-tyrosine + UTP = [protein-PII]-uridylyl-L-tyrosine + diphosphate. It carries out the reaction [protein-PII]-uridylyl-L-tyrosine + H2O = [protein-PII]-L-tyrosine + UMP + H(+). Uridylyltransferase (UTase) activity is inhibited by glutamine, while glutamine activates uridylyl-removing (UR) activity. Modifies, by uridylylation and deuridylylation, the PII regulatory proteins (GlnB and homologs), in response to the nitrogen status of the cell that GlnD senses through the glutamine level. Under low glutamine levels, catalyzes the conversion of the PII proteins and UTP to PII-UMP and PPi, while under higher glutamine levels, GlnD hydrolyzes PII-UMP to PII and UMP (deuridylylation). Thus, controls uridylylation state and activity of the PII proteins, and plays an important role in the regulation of nitrogen assimilation and metabolism. The polypeptide is Bifunctional uridylyltransferase/uridylyl-removing enzyme (Novosphingobium aromaticivorans (strain ATCC 700278 / DSM 12444 / CCUG 56034 / CIP 105152 / NBRC 16084 / F199)).